A 186-amino-acid chain; its full sequence is Imidazole glycerol phosphate synthase subunit HisH (186 aa).

In terms of domain architecture, Glutamine amidotransferase type-1 spans 1–186; sequence MIAIIDYGSG…KLLRNFGELA (186 aa). The active-site Nucleophile is Cys72. Residues His167 and Glu169 contribute to the active site.

In terms of assembly, heterodimer of HisH and HisF.

The protein localises to the cytoplasm. The enzyme catalyses 5-[(5-phospho-1-deoxy-D-ribulos-1-ylimino)methylamino]-1-(5-phospho-beta-D-ribosyl)imidazole-4-carboxamide + L-glutamine = D-erythro-1-(imidazol-4-yl)glycerol 3-phosphate + 5-amino-1-(5-phospho-beta-D-ribosyl)imidazole-4-carboxamide + L-glutamate + H(+). It catalyses the reaction L-glutamine + H2O = L-glutamate + NH4(+). The protein operates within amino-acid biosynthesis; L-histidine biosynthesis; L-histidine from 5-phospho-alpha-D-ribose 1-diphosphate: step 5/9. Its function is as follows. IGPS catalyzes the conversion of PRFAR and glutamine to IGP, AICAR and glutamate. The HisH subunit catalyzes the hydrolysis of glutamine to glutamate and ammonia as part of the synthesis of IGP and AICAR. The resulting ammonia molecule is channeled to the active site of HisF. The protein is Imidazole glycerol phosphate synthase subunit HisH of Picrophilus torridus (strain ATCC 700027 / DSM 9790 / JCM 10055 / NBRC 100828 / KAW 2/3).